A 410-amino-acid polypeptide reads, in one-letter code: WD repeat and FYVE domain-containing protein 1 (410 aa).

WD repeat units follow at residues 22-61 (GHQD…QYWP), 66-105 (TMAS…NKMN), 112-150 (AHQN…NMLG), 153-192 (FFTS…CSVI), 197-236 (GHEG…GRTL), and 240-279 (GHHD…EEAP). The FYVE-type zinc finger occupies 281-352 (WLESDSCQKC…VCDSCYDSIK (72 aa)). Zn(2+)-binding residues include cysteine 287, cysteine 290, cysteine 314, cysteine 317, cysteine 322, cysteine 325, cysteine 344, and cysteine 347. One copy of the WD 7 repeat lies at 364-403 (EGKHNISHMSMDIARGLMVTCGTDRIVKIWDMTPVVGCSL). At serine 408 the chain carries Phosphoserine.

In terms of assembly, binds PtdIns3P in vitro with high specificity over other phosphoinositides. Interacts (via WD repeat 2) with tyrosine-phosphorylated TLR3 (via TIR domain) in response to poly(I:C). Interacts with TICAM1 in response to poly(I:C). Interacts with TLR4 in response to LPS.

The protein localises to the early endosome. Its function is as follows. Positively regulates TLR3- and TLR4-mediated signaling pathways by bridging the interaction between TLR3 or TLR4 and TICAM1. Promotes TLR3/4 ligand-induced activation of transcription factors IRF3 and NF-kappa-B, as well as the production of IFN-beta and inflammatory cytokines. This Homo sapiens (Human) protein is WD repeat and FYVE domain-containing protein 1 (WDFY1).